The primary structure comprises 153 residues: Lectin-like protein EP153R (153 aa).

Over 1–30 (MYFKKKYIGLIDKNCEKKILDDSSTIKICY) the chain is Cytoplasmic. A helical membrane pass occupies residues 31 to 51 (ILIGILIGTNMITLIYNFIFW). Residues 52–153 (DNYIKCYRNN…YTDLLFICGK (102 aa)) are Extracellular-facing. A disulfide bond links Cys67 and Cys78. Residues Asn83, Asn89, Asn101, Asn107, Asn113, Asn120, Asn127, and Asn143 are each glycosylated (N-linked (GlcNAc...) asparagine; by host). Residues Cys97 and Cys151 are joined by a disulfide bond.

The protein belongs to the asfivirus lectin-like protein family. Homodimer.

Its subcellular location is the host endoplasmic reticulum membrane. In terms of biological role, down-regulates MHC-I expression by impairing the appropriate configuration or presentation into the plasma membrane of the latter. Participates in viral hemadsorption, which may help viral spread. Reduces the transactivating activity of host TP53, thus inhibiting apoptosis. Non-essential for virus growth in swine macrophage cell cultures. The polypeptide is Lectin-like protein EP153R (African swine fever virus (strain Badajoz 1971 Vero-adapted) (Ba71V)).